A 124-amino-acid polypeptide reads, in one-letter code: Heat-labile enterotoxin B chain (124 aa).

Residues 1-21 (MNKVKFYVLFTALLSSLCAHG) form the signal peptide. A disulfide bond links cysteine 30 and cysteine 107.

In terms of assembly, heterohexamer of one A chain and of five B chains.

Functionally, the biological activity of the toxin is produced by the A chain, which activates intracellular adenyl cyclase. In Escherichia coli, this protein is Heat-labile enterotoxin B chain (eltB).